A 167-amino-acid polypeptide reads, in one-letter code: Protein archease (167 aa).

The residue at position 2 (alanine 2) is an N-acetylalanine. Ca(2+) contacts are provided by aspartate 39, aspartate 166, and isoleucine 167.

It belongs to the archease family. In terms of assembly, component of the tRNA-splicing ligase complex.

Component of the tRNA-splicing ligase complex required to facilitate the enzymatic turnover of catalytic subunit RTCB. Together with DDX1, acts by facilitating the guanylylation of RTCB, a key intermediate step in tRNA ligation. The protein is Protein archease (ZBTB8OS) of Homo sapiens (Human).